Reading from the N-terminus, the 358-residue chain is Dynein axonemal assembly factor 10 (358 aa).

6 WD repeats span residues Glu63 to Phe105, Ala109 to Ala154, Asn162 to Glu205, Asn207 to Gly249, Thr258 to Val298, and Ile320 to Val358.

In terms of assembly, interacts with PIH1D1; the interaction associates DNAAF10 with the R2TP complex. Interacts with several dynein axonemal assembly factors.

The protein localises to the dynein axonemal particle. Key assembly factor specifically required for the stability of axonemal dynein heavy chains in cytoplasm. The chain is Dynein axonemal assembly factor 10 (dnaaf10) from Chlamydomonas reinhardtii (Chlamydomonas smithii).